Reading from the N-terminus, the 107-residue chain is Nucleoid-associated protein A1C_06705 (107 aa).

The protein belongs to the YbaB/EbfC family. In terms of assembly, homodimer.

Its subcellular location is the cytoplasm. The protein resides in the nucleoid. Binds to DNA and alters its conformation. May be involved in regulation of gene expression, nucleoid organization and DNA protection. The protein is Nucleoid-associated protein A1C_06705 of Rickettsia akari (strain Hartford).